We begin with the raw amino-acid sequence, 494 residues long: Alpha-amylase-related protein (494 aa).

Positions 1-20 (MIKFALALTLCLAGASLSLA) are cleaved as a signal peptide. Position 21 is a pyrrolidone carboxylic acid (glutamine 21). Cysteine 48 and cysteine 104 are oxidised to a cystine. The Ca(2+) site is built by asparagine 118, glutamine 169, and aspartate 178. An intrachain disulfide couples cysteine 157 to cysteine 171. Arginine 206 lines the chloride pocket. Aspartate 208 acts as the Nucleophile in catalysis. Histidine 212 contributes to the Ca(2+) binding site. Glutamate 245 acts as the Proton donor in catalysis. Positions 308 and 343 each coordinate chloride. 3 disulfide bridges follow: cysteine 376-cysteine 382, cysteine 418-cysteine 441, and cysteine 448-cysteine 460.

It belongs to the glycosyl hydrolase 13 family. As to quaternary structure, monomer. It depends on Ca(2+) as a cofactor. Chloride serves as cofactor.

The protein resides in the secreted. It carries out the reaction Endohydrolysis of (1-&gt;4)-alpha-D-glucosidic linkages in polysaccharides containing three or more (1-&gt;4)-alpha-linked D-glucose units.. The polypeptide is Alpha-amylase-related protein (Amyrel) (Drosophila jambulina (Fruit fly)).